Here is a 65-residue protein sequence, read N- to C-terminus: Large ribosomal subunit protein uL29 (65 aa).

Belongs to the universal ribosomal protein uL29 family.

In Lactobacillus delbrueckii subsp. bulgaricus (strain ATCC 11842 / DSM 20081 / BCRC 10696 / JCM 1002 / NBRC 13953 / NCIMB 11778 / NCTC 12712 / WDCM 00102 / Lb 14), this protein is Large ribosomal subunit protein uL29.